A 602-amino-acid polypeptide reads, in one-letter code: Probable beta-glucosidase btgE (602 aa).

The signal sequence occupies residues 1 to 18 (MRGAFLAAAAAVAGTAMA). Disordered stretches follow at residues 61 to 94 (PPTL…SVVT) and 116 to 166 (GVDA…TSFS). Positions 74 to 94 (PSSSSSSEVPSVPSSESSVVT) are enriched in low complexity. Polar residues predominate over residues 152 to 166 (TSESPLPTPGVTSFS). The Proton donor role is filled by E443. The active-site Nucleophile is E538.

Belongs to the glycosyl hydrolase 17 family.

The protein resides in the secreted. Its subcellular location is the cell wall. The enzyme catalyses Hydrolysis of terminal, non-reducing beta-D-glucosyl residues with release of beta-D-glucose.. The protein operates within glycan metabolism; cellulose degradation. Its function is as follows. Beta-glucosidases are one of a number of cellulolytic enzymes involved in the degradation of cellulosic biomass. Catalyzes the last step releasing glucose from the inhibitory cellobiose. The polypeptide is Probable beta-glucosidase btgE (btgE) (Aspergillus flavus (strain ATCC 200026 / FGSC A1120 / IAM 13836 / NRRL 3357 / JCM 12722 / SRRC 167)).